The following is a 124-amino-acid chain: Large ribosomal subunit protein uL29 (124 aa).

It belongs to the universal ribosomal protein uL29 family.

This Tetrahymena thermophila (strain SB210) protein is Large ribosomal subunit protein uL29 (RPL35).